The primary structure comprises 313 residues: Protein-methionine-sulfoxide reductase catalytic subunit MsrP (313 aa).

Positions 1 to 44 (MARWRPDMAEREATPEALYLRRREFLALGAAGAVGLLVARGARA) form a signal peptide, tat-type signal. Mo-molybdopterin is bound by residues N76, 79–80 (YE), C134, T169, N217, R222, and 233–235 (GAK).

It belongs to the MsrP family. In terms of assembly, heterodimer of a catalytic subunit (MsrP) and a heme-binding subunit (MsrQ). It depends on Mo-molybdopterin as a cofactor. In terms of processing, predicted to be exported by the Tat system. The position of the signal peptide cleavage has not been experimentally proven.

Its subcellular location is the periplasm. The catalysed reaction is L-methionyl-[protein] + a quinone + H2O = L-methionyl-(S)-S-oxide-[protein] + a quinol. The enzyme catalyses L-methionyl-[protein] + a quinone + H2O = L-methionyl-(R)-S-oxide-[protein] + a quinol. In terms of biological role, part of the MsrPQ system that repairs oxidized periplasmic proteins containing methionine sulfoxide residues (Met-O), using respiratory chain electrons. Thus protects these proteins from oxidative-stress damage caused by reactive species of oxygen and chlorine generated by the host defense mechanisms. MsrPQ is essential for the maintenance of envelope integrity under bleach stress, rescuing a wide series of structurally unrelated periplasmic proteins from methionine oxidation. The catalytic subunit MsrP is non-stereospecific, being able to reduce both (R-) and (S-) diastereoisomers of methionine sulfoxide. The protein is Protein-methionine-sulfoxide reductase catalytic subunit MsrP of Anaeromyxobacter sp. (strain K).